A 144-amino-acid chain; its full sequence is Apidaecins type 22 (144 aa).

The first 19 residues, 1–19 (MKNFALAILVVTFVVAVFG), serve as a signal peptide directing secretion. 4 propeptides span residues 20–42 (NTNL…EAEP), 63–70 (EAEPEAEP), 91–98 (EAEPEAEP), and 119–126 (EAEPEAEP). The interval 20–144 (NTNLDPPTRP…PQPRPPHPRI (125 aa)) is disordered. Pro residues predominate over residues 134 to 144 (IPQPRPPHPRI).

Belongs to the apidaecin family.

The protein localises to the secreted. Apidaecins have bactericidal activity; predominantly against Gram-negative bacteria. They seem to interfere with cell propagation. This chain is Apidaecins type 22, found in Apis mellifera (Honeybee).